We begin with the raw amino-acid sequence, 839 residues long: Autophagy-related protein 9A (839 aa).

An N-acetylalanine modification is found at A2. The Cytoplasmic portion of the chain corresponds to A2–C61. Residues Y8 to L11 carry the Tyrosine-based sorting signal motif. Residues S14, S16, and S18 each carry the phosphoserine modification. A helical membrane pass occupies residues M62 to V84. Residues S85–E128 are Lumenal-facing. N99 carries an N-linked (GlcNAc...) asparagine glycan. Residues N129–I154 traverse the membrane as a helical segment. Residues C155–I290 lie on the Cytoplasmic side of the membrane. An intramembrane segment occupies L291 to C301. Over P302–V319 the chain is Cytoplasmic. The stretch at L320–G328 is an intramembrane region. At A329–P371 the chain is on the cytoplasmic side. The helical transmembrane segment at L372–Y397 threads the bilayer. The Lumenal portion of the chain corresponds to D398–H406. A helical transmembrane segment spans residues V407 to F424. The Cytoplasmic segment spans residues I425–Q470. Residues Y471–L480 lie within the membrane without spanning it. Over L481–P483 the chain is Cytoplasmic. An intramembrane segment occupies I484–F492. Topologically, residues C493 to V839 are cytoplasmic. 5 positions are modified to phosphoserine: S656, S735, S738, S741, and S828. Disordered stretches follow at residues S656 to W689 and H717 to V839. Residues E724–D736 are compositionally biased toward basic and acidic residues. Composition is skewed to acidic residues over residues E737–G747 and V823–L832.

Belongs to the ATG9 family. In terms of assembly, homotrimer; forms a homotrimer with a central pore that forms a path between the two membrane leaflets. Interacts (via cytoplasmic its C-terminus) with ATG2A. Interacts with SUPT20H. Interacts (via the tyrosine-based sorting signal motif) with AP4M1; promoting association with the AP-4 complex. Interacts with ARFIP1 and ARFIP2. Interacts with PI4K2A and PI4KB. Interacts with ATG4A; the interaction is direct and promotes ATG9A trafficking. Ufmylated in a DDRGK1 dependent manner.

Its subcellular location is the preautophagosomal structure membrane. The protein resides in the cytoplasmic vesicle. It is found in the autophagosome membrane. It localises to the golgi apparatus. The protein localises to the trans-Golgi network membrane. Its subcellular location is the late endosome membrane. The protein resides in the recycling endosome membrane. It is found in the endoplasmic reticulum membrane. It localises to the mitochondrion membrane. The catalysed reaction is a 1,2-diacyl-sn-glycero-3-phosphocholine(in) = a 1,2-diacyl-sn-glycero-3-phosphocholine(out). It catalyses the reaction a 1,2-diacyl-sn-glycero-3-phospho-L-serine(in) = a 1,2-diacyl-sn-glycero-3-phospho-L-serine(out). The enzyme catalyses a 1,2-diacyl-sn-glycero-3-phosphoethanolamine(in) = a 1,2-diacyl-sn-glycero-3-phosphoethanolamine(out). In terms of biological role, phospholipid scramblase involved in autophagy by mediating autophagosomal membrane expansion. Cycles between the preautophagosomal structure/phagophore assembly site (PAS) and the cytoplasmic vesicle pool and supplies membrane for the growing autophagosome. Lipid scramblase activity plays a key role in preautophagosomal structure/phagophore assembly by distributing the phospholipids that arrive through ATG2 (ATG2A or ATG2B) from the cytoplasmic to the luminal leaflet of the bilayer, thereby driving autophagosomal membrane expansion. Also required to supply phosphatidylinositol 4-phosphate to the autophagosome initiation site by recruiting the phosphatidylinositol 4-kinase beta (PI4KB) in a process dependent on ARFIP2, but not ARFIP1. In addition to autophagy, also plays a role in necrotic cell death. This Rattus norvegicus (Rat) protein is Autophagy-related protein 9A.